The primary structure comprises 207 residues: Large ribosomal subunit protein uL3 (207 aa).

Residues 113-148 (KGKGFQGPIKRHGQSRGPMAHGSRYHRRPGSMGPVA) are disordered.

The protein belongs to the universal ribosomal protein uL3 family. In terms of assembly, part of the 50S ribosomal subunit. Forms a cluster with proteins L14 and L19.

In terms of biological role, one of the primary rRNA binding proteins, it binds directly near the 3'-end of the 23S rRNA, where it nucleates assembly of the 50S subunit. In Lactococcus lactis subsp. lactis (strain IL1403) (Streptococcus lactis), this protein is Large ribosomal subunit protein uL3.